We begin with the raw amino-acid sequence, 178 residues long: Putative pre-16S rRNA nuclease (178 aa).

Basic and acidic residues-rich tracts occupy residues 1-18 (MDHA…DPGR) and 50-60 (PRSKDRGPDAP). 2 disordered regions span residues 1-23 (MDHA…RRIG) and 36-60 (SDPD…PDAP).

The protein belongs to the YqgF nuclease family.

The protein localises to the cytoplasm. Functionally, could be a nuclease involved in processing of the 5'-end of pre-16S rRNA. This is Putative pre-16S rRNA nuclease from Rhodococcus opacus (strain B4).